The chain runs to 426 residues: Serine--tRNA ligase (426 aa).

233-235 serves as a coordination point for L-serine; that stretch reads TAE. Residue 264–266 coordinates ATP; sequence RSE. Glu287 provides a ligand contact to L-serine. 351–354 contacts ATP; it reads EISS. An L-serine-binding site is contributed by Ser387.

The protein belongs to the class-II aminoacyl-tRNA synthetase family. Type-1 seryl-tRNA synthetase subfamily. As to quaternary structure, homodimer. The tRNA molecule binds across the dimer.

The protein localises to the cytoplasm. The catalysed reaction is tRNA(Ser) + L-serine + ATP = L-seryl-tRNA(Ser) + AMP + diphosphate + H(+). It carries out the reaction tRNA(Sec) + L-serine + ATP = L-seryl-tRNA(Sec) + AMP + diphosphate + H(+). Its pathway is aminoacyl-tRNA biosynthesis; selenocysteinyl-tRNA(Sec) biosynthesis; L-seryl-tRNA(Sec) from L-serine and tRNA(Sec): step 1/1. Its function is as follows. Catalyzes the attachment of serine to tRNA(Ser). Is also able to aminoacylate tRNA(Sec) with serine, to form the misacylated tRNA L-seryl-tRNA(Sec), which will be further converted into selenocysteinyl-tRNA(Sec). In Clostridium botulinum (strain Hall / ATCC 3502 / NCTC 13319 / Type A), this protein is Serine--tRNA ligase.